The chain runs to 313 residues: CBK1 kinase activator protein MOB2 (313 aa).

The tract at residues 1–109 (MSFLNTIRGL…KRSSIQTTKS (109 aa)) is disordered. Residues 23 to 69 (PSNNAIYSHSNLSGNGLRRTQSPTKFSPSKLSSKGAQGSAAYTSSPT) are compositionally biased toward polar residues. 4 positions are modified to phosphoserine; by CDC28: Ser44, Ser51, Ser67, and Ser97. Over residues 76 to 97 (QSLQHQDSQSSLQYQQQSGSVS) the composition is skewed to low complexity. A compositionally biased stretch (polar residues) spans 98 to 109 (PSKRSSIQTTKS).

This sequence belongs to the MOB1/phocein family. Interacts with protein kinase CBK1 to form the RAM CBK1-MOB2 kinase complex. Phosphorylated by CDC28 at Ser-44, Ser-51, Ser-67, and Ser-97. Phosphorylation occurs during bud emergence and is maintained until the G2/M transition. Dephosphorylated at the end of mitosis. Phosphorylation is required for the maintenance of polarisome components in hyphae.

It localises to the nucleus. Its subcellular location is the cytoplasm. Its function is as follows. Functions as an activator subunit for the CBK1 protein kinase. Part of the regulation of ACE2 activity and cellular morphogenesis (RAM) signaling network. The RAM network is critically required for hyphal growth as well as normal vegetative growth, and for polarization of lipid rafts and the actin cytoskeleton. It play an essential role in biofilm formation. The RAM network also plays a role in serum- and antifungal azoles-induced activation of ergosterol biosynthesis genes, especially those involved in the late steps of ergosterol biosynthesis. The sequence is that of CBK1 kinase activator protein MOB2 (MOB2) from Candida albicans (strain SC5314 / ATCC MYA-2876) (Yeast).